A 551-amino-acid chain; its full sequence is Cation/acetate symporter ActP (551 aa).

14 helical membrane passes run 5 to 25, 34 to 54, 77 to 97, 104 to 124, 150 to 170, 184 to 204, 207 to 227, 263 to 283, 304 to 324, 356 to 376, 406 to 426, 430 to 450, 469 to 489, and 498 to 518; these read HWSALSLFVLPALAQAEALTG, IQAIVMFLLFVGGTLYITYWA, GLAIAGDYMSAASFLGISALV, GLIYSIGFLIGWPIILFLIAE, LSACGSLVVVALYLIAQMVGA, VAVVLVGILMVLYVLFGGMLA, WVQIIKAVMLLSGATFMAIMV, ISALSLGLALMFGTAGLPHIL, GFIGYFYILTFIIGFGAILLV, FFLGFISAVAFATILAVVAGL, VSKITVIILGIVAIGLGILFE, IAFMVGLAFSIAASCNFPIII, LGLSTAVILMILGPTIWVTIL, and YEYPALFSMIAAFVGTWFFSI.

The protein belongs to the sodium:solute symporter (SSF) (TC 2.A.21) family.

It is found in the cell inner membrane. In terms of biological role, transports acetate. The sequence is that of Cation/acetate symporter ActP from Yersinia pseudotuberculosis serotype IB (strain PB1/+).